A 492-amino-acid chain; its full sequence is Catalase isozyme 3 (492 aa).

Catalysis depends on residues His-65 and Asn-138. Tyr-348 is a heme binding site.

It belongs to the catalase family. In terms of assembly, homotetramer. Requires heme as cofactor.

The protein resides in the peroxisome. The enzyme catalyses 2 H2O2 = O2 + 2 H2O. Its function is as follows. Occurs in almost all aerobically respiring organisms and serves to protect cells from the toxic effects of hydrogen peroxide. The chain is Catalase isozyme 3 (CAT3) from Nicotiana plumbaginifolia (Leadwort-leaved tobacco).